A 199-amino-acid polypeptide reads, in one-letter code: Charged multivesicular body protein 1b (199 aa).

2 coiled-coil regions span residues 8 to 42 (LFNLKFAAKELNRNAKKCEKEEKTEKAKIKKAIQK) and 178 to 199 (TSVASTEQDELSQRLARLRDQV). Residues 167-199 (ELPQGQTGSVGTSVASTEQDELSQRLARLRDQV) are disordered. The segment covering 170–183 (QGQTGSVGTSVAST) has biased composition (polar residues). An MIT-interacting motif motif is present at residues 186–196 (DELSQRLARLR).

Belongs to the SNF7 family. Probable peripherally associated component of the endosomal sorting required for transport complex III (ESCRT-III).

It is found in the cytoplasm. Its subcellular location is the cytosol. It localises to the endosome. The protein resides in the late endosome membrane. In terms of biological role, probable peripherally associated component of the endosomal sorting required for transport complex III (ESCRT-III) which is involved in multivesicular bodies (MVBs) formation and sorting of endosomal cargo proteins into MVBs. MVBs contain intraluminal vesicles (ILVs) that are generated by invagination and scission from the limiting membrane of the endosome and mostly are delivered to lysosomes enabling degradation of membrane proteins, such as stimulated growth factor receptors, lysosomal enzymes and lipids. The chain is Charged multivesicular body protein 1b (chmp1b) from Xenopus laevis (African clawed frog).